The chain runs to 390 residues: S-adenosylmethionine synthase 2 (390 aa).

Glu9 is a Mg(2+) binding site. His15 serves as a coordination point for ATP. Glu43 is a binding site for K(+). L-methionine contacts are provided by Glu56 and Gln99. Residues Asp167 to Lys169, Ser235 to Phe238, Asp246, Arg252 to Lys253, Ala269, Lys273, and Lys277 each bind ATP. Asp246 contacts L-methionine. Lys277 is a binding site for L-methionine.

Belongs to the AdoMet synthase family. As to quaternary structure, homotetramer. Mn(2+) serves as cofactor. The cofactor is Mg(2+). Co(2+) is required as a cofactor. It depends on K(+) as a cofactor.

It is found in the cytoplasm. The enzyme catalyses L-methionine + ATP + H2O = S-adenosyl-L-methionine + phosphate + diphosphate. Its pathway is amino-acid biosynthesis; S-adenosyl-L-methionine biosynthesis; S-adenosyl-L-methionine from L-methionine: step 1/1. In terms of biological role, catalyzes the formation of S-adenosylmethionine from methionine and ATP. The reaction comprises two steps that are both catalyzed by the same enzyme: formation of S-adenosylmethionine (AdoMet) and triphosphate, and subsequent hydrolysis of the triphosphate. This Nicotiana tabacum (Common tobacco) protein is S-adenosylmethionine synthase 2 (SAMS2).